The chain runs to 578 residues: PTS system fructose-specific EIIB'BC component (578 aa).

PTS EIIB type-2 domains follow at residues 1–99 (MSKI…EALA) and 119–214 (VVAI…AALA). Residue cysteine 125 is the Phosphocysteine intermediate; for EIIB activity of the active site. The residue at position 125 (cysteine 125) is a Phosphocysteine; by EIIA. Residues 241–576 (PYMHLLTGVS…KKPIPAEERA (336 aa)) enclose the PTS EIIC type-2 domain. A run of 9 helical transmembrane segments spans residues 251–271 (YMLP…VFGI), 284–304 (LMAI…AGFI), 319–339 (IGGM…VAGF), 364–384 (VLIL…YVVG), 405–425 (NAVV…GGPI), 428–450 (AAYT…AVMA), 477–497 (AGGA…IPFA), 518–538 (LSMA…VLAI), and 545–565 (LGLY…LLIA).

The protein resides in the cell inner membrane. The enzyme catalyses D-fructose(out) + N(pros)-phospho-L-histidyl-[protein] = D-fructose 1-phosphate(in) + L-histidyl-[protein]. The phosphoenolpyruvate-dependent sugar phosphotransferase system (sugar PTS), a major carbohydrate active transport system, catalyzes the phosphorylation of incoming sugar substrates concomitantly with their translocation across the cell membrane. The enzyme II FruAB PTS system is involved in fructose transport. The protein is PTS system fructose-specific EIIB'BC component of Rhodobacter capsulatus (Rhodopseudomonas capsulata).